The chain runs to 164 residues: 6,7-dimethyl-8-ribityllumazine synthase (164 aa).

Residues Phe-22, 56–58 (AWE), and 80–82 (AVI) each bind 5-amino-6-(D-ribitylamino)uracil. 85-86 (DT) is a (2S)-2-hydroxy-3-oxobutyl phosphate binding site. Catalysis depends on His-88, which acts as the Proton donor. Position 113 (Leu-113) interacts with 5-amino-6-(D-ribitylamino)uracil. Position 127 (Arg-127) interacts with (2S)-2-hydroxy-3-oxobutyl phosphate.

Belongs to the DMRL synthase family.

The enzyme catalyses (2S)-2-hydroxy-3-oxobutyl phosphate + 5-amino-6-(D-ribitylamino)uracil = 6,7-dimethyl-8-(1-D-ribityl)lumazine + phosphate + 2 H2O + H(+). Its pathway is cofactor biosynthesis; riboflavin biosynthesis; riboflavin from 2-hydroxy-3-oxobutyl phosphate and 5-amino-6-(D-ribitylamino)uracil: step 1/2. Catalyzes the formation of 6,7-dimethyl-8-ribityllumazine by condensation of 5-amino-6-(D-ribitylamino)uracil with 3,4-dihydroxy-2-butanone 4-phosphate. This is the penultimate step in the biosynthesis of riboflavin. In Gemmatimonas aurantiaca (strain DSM 14586 / JCM 11422 / NBRC 100505 / T-27), this protein is 6,7-dimethyl-8-ribityllumazine synthase.